Consider the following 841-residue polypeptide: Protein translocase subunit SecA (841 aa).

ATP-binding positions include Gln85, 103-107 (GEGKT), and Asp492. The tract at residues 790–814 (IQGQTTAHQPKEGDEEKQAKKKPVR) is disordered. Residues 798–807 (QPKEGDEEKQ) are compositionally biased toward basic and acidic residues. Residues Cys825, Cys827, Cys836, and Cys837 each contribute to the Zn(2+) site.

Belongs to the SecA family. As to quaternary structure, monomer and homodimer. Part of the essential Sec protein translocation apparatus which comprises SecA, SecYEG and auxiliary proteins SecDF. Other proteins may also be involved. Zn(2+) serves as cofactor.

It is found in the cell membrane. It localises to the cytoplasm. The catalysed reaction is ATP + H2O + cellular proteinSide 1 = ADP + phosphate + cellular proteinSide 2.. In terms of biological role, part of the Sec protein translocase complex. Interacts with the SecYEG preprotein conducting channel. Has a central role in coupling the hydrolysis of ATP to the transfer of proteins into and across the cell membrane, serving as an ATP-driven molecular motor driving the stepwise translocation of polypeptide chains across the membrane. The sequence is that of Protein translocase subunit SecA from Bacillus licheniformis (strain ATCC 14580 / DSM 13 / JCM 2505 / CCUG 7422 / NBRC 12200 / NCIMB 9375 / NCTC 10341 / NRRL NRS-1264 / Gibson 46).